The following is a 519-amino-acid chain: Cell division cycle protein 20 homolog B (519 aa).

Residues 77 to 106 (WQLSPARDPESSSSVEEGPPSHTPESLASG) are disordered. Residues 87–96 (SSSSVEEGPP) are compositionally biased toward low complexity. 6 WD repeats span residues 229 to 266 (RNDY…WIEN), 271 to 310 (VCCH…QLRN), 353 to 392 (YHKE…GVQG), 399 to 441 (PQST…NIQT), 443 to 484 (STQS…RSGG), and 487 to 519 (GHRD…WKCC).

The protein belongs to the WD repeat CDC20/Fizzy family. Expressed in multiciliated cells (MCCs).

Its subcellular location is the cytoplasm. In terms of biological role, protein regulator of centriole-deuterosome disengagement and subsequently participates in the ciliogenesis in multiciliated cells (MCCs). This Mus musculus (Mouse) protein is Cell division cycle protein 20 homolog B.